The primary structure comprises 214 residues: Large ribosomal subunit protein uL3 (214 aa).

Gln153 carries the post-translational modification N5-methylglutamine.

The protein belongs to the universal ribosomal protein uL3 family. In terms of assembly, part of the 50S ribosomal subunit. Forms a cluster with proteins L14 and L19. In terms of processing, methylated by PrmB.

Functionally, one of the primary rRNA binding proteins, it binds directly near the 3'-end of the 23S rRNA, where it nucleates assembly of the 50S subunit. This Methylobacillus flagellatus (strain ATCC 51484 / DSM 6875 / VKM B-1610 / KT) protein is Large ribosomal subunit protein uL3.